We begin with the raw amino-acid sequence, 132 residues long: D-ribose pyranase (132 aa).

Catalysis depends on His-20, which acts as the Proton donor. Substrate is bound by residues Asp-28, His-99, and 121–123 (YSN).

This sequence belongs to the RbsD / FucU family. RbsD subfamily. Homodecamer.

Its subcellular location is the cytoplasm. It carries out the reaction beta-D-ribopyranose = beta-D-ribofuranose. The protein operates within carbohydrate metabolism; D-ribose degradation; D-ribose 5-phosphate from beta-D-ribopyranose: step 1/2. Functionally, catalyzes the interconversion of beta-pyran and beta-furan forms of D-ribose. This chain is D-ribose pyranase, found in Streptococcus uberis (strain ATCC BAA-854 / 0140J).